Reading from the N-terminus, the 265-residue chain is Phosphatidylserine decarboxylase proenzyme (265 aa).

The active-site Schiff-base intermediate with substrate; via pyruvic acid is the Ser183. A Pyruvic acid (Ser); by autocatalysis modification is found at Ser183. Residues 218–242 (PQIESEPESEPALQTAPVETAANPS) form a disordered region.

The protein belongs to the phosphatidylserine decarboxylase family. PSD-A subfamily. Heterodimer of a large membrane-associated beta subunit and a small pyruvoyl-containing alpha subunit. Pyruvate serves as cofactor. In terms of processing, is synthesized initially as an inactive proenzyme. Formation of the active enzyme involves a self-maturation process in which the active site pyruvoyl group is generated from an internal serine residue via an autocatalytic post-translational modification. Two non-identical subunits are generated from the proenzyme in this reaction, and the pyruvate is formed at the N-terminus of the alpha chain, which is derived from the carboxyl end of the proenzyme. The post-translation cleavage follows an unusual pathway, termed non-hydrolytic serinolysis, in which the side chain hydroxyl group of the serine supplies its oxygen atom to form the C-terminus of the beta chain, while the remainder of the serine residue undergoes an oxidative deamination to produce ammonia and the pyruvoyl prosthetic group on the alpha chain.

The protein localises to the cell membrane. The enzyme catalyses a 1,2-diacyl-sn-glycero-3-phospho-L-serine + H(+) = a 1,2-diacyl-sn-glycero-3-phosphoethanolamine + CO2. The protein operates within phospholipid metabolism; phosphatidylethanolamine biosynthesis; phosphatidylethanolamine from CDP-diacylglycerol: step 2/2. Functionally, catalyzes the formation of phosphatidylethanolamine (PtdEtn) from phosphatidylserine (PtdSer). The polypeptide is Phosphatidylserine decarboxylase proenzyme (Neisseria meningitidis serogroup C (strain 053442)).